Reading from the N-terminus, the 284-residue chain is Tropomyosin Per a 7.0103 (284 aa).

Residues 1–266 adopt a coiled-coil conformation; sequence MDAIKKKMQA…EDELVHEKEK (266 aa).

This sequence belongs to the tropomyosin family. As to quaternary structure, homodimer.

In terms of biological role, tropomyosin, in association with the troponin complex, plays a central role in the calcium dependent regulation of muscle contraction. In Periplaneta americana (American cockroach), this protein is Tropomyosin Per a 7.0103.